A 509-amino-acid chain; its full sequence is Putative ATP-dependent RNA helicase QP509L (509 aa).

The Helicase ATP-binding domain maps to 110–262; the sequence is KKLLSPYGRF…KIIIHHLGQP (153 aa). 123-130 contributes to the ATP binding site; sequence LNTGLGKT. The DEAH box signature appears at 215–218; that stretch reads DEAH.

It belongs to the DEAD box helicase family. DEAH subfamily.

It carries out the reaction ATP + H2O = ADP + phosphate + H(+). The chain is Putative ATP-dependent RNA helicase QP509L from African swine fever virus (strain Badajoz 1971 Vero-adapted) (Ba71V).